Reading from the N-terminus, the 93-residue chain is U12-lycotoxin-Ls1c (93 aa).

Residues 1–18 (MKFAVILLFSLVVLAVAS) form the signal peptide. A propeptide spanning residues 19–38 (ESVEEVRREIDIEDLPEQQR) is cleaved from the precursor.

This sequence belongs to the neurotoxin 31 family. Contains 5 disulfide bonds. As to expression, expressed by the venom gland.

Its subcellular location is the secreted. This chain is U12-lycotoxin-Ls1c, found in Lycosa singoriensis (Wolf spider).